The following is a 93-amino-acid chain: Small ribosomal subunit protein uS19 (93 aa).

The segment at 73–93 (EFSPTRTFRGHVKDDRKSKRR) is disordered. Residues 83–93 (HVKDDRKSKRR) are compositionally biased toward basic and acidic residues.

Belongs to the universal ribosomal protein uS19 family.

Protein S19 forms a complex with S13 that binds strongly to the 16S ribosomal RNA. This is Small ribosomal subunit protein uS19 from Streptomyces coelicolor (strain ATCC BAA-471 / A3(2) / M145).